The primary structure comprises 652 residues: DNA ligase (652 aa).

NAD(+) contacts are provided by residues 29-33 (DSDYD), 78-79 (SL), and Glu-107. The active-site N6-AMP-lysine intermediate is Lys-109. Positions 130, 164, 278, and 302 each coordinate NAD(+). Positions 395, 398, 413, and 418 each coordinate Zn(2+). The BRCT domain occupies 577 to 652 (NSDAALFGLT…IEDEDWLRQL (76 aa)).

Belongs to the NAD-dependent DNA ligase family. LigA subfamily. It depends on Mg(2+) as a cofactor. The cofactor is Mn(2+).

The enzyme catalyses NAD(+) + (deoxyribonucleotide)n-3'-hydroxyl + 5'-phospho-(deoxyribonucleotide)m = (deoxyribonucleotide)n+m + AMP + beta-nicotinamide D-nucleotide.. Its function is as follows. DNA ligase that catalyzes the formation of phosphodiester linkages between 5'-phosphoryl and 3'-hydroxyl groups in double-stranded DNA using NAD as a coenzyme and as the energy source for the reaction. It is essential for DNA replication and repair of damaged DNA. In Streptococcus pyogenes serotype M12 (strain MGAS2096), this protein is DNA ligase.